The sequence spans 143 residues: Large-conductance mechanosensitive channel (143 aa).

A run of 2 helical transmembrane segments spans residues 10–30 and 89–109; these read FAVKGNVMDLAVGVIIGGAFS and GSFITVAINFVILAFIIFLMV.

It belongs to the MscL family. As to quaternary structure, homopentamer.

The protein resides in the cell inner membrane. Functionally, channel that opens in response to stretch forces in the membrane lipid bilayer. May participate in the regulation of osmotic pressure changes within the cell. This chain is Large-conductance mechanosensitive channel, found in Burkholderia cenocepacia (strain HI2424).